A 309-amino-acid polypeptide reads, in one-letter code: D-alanine--D-alanine ligase (309 aa).

One can recognise an ATP-grasp domain in the interval 109–304 (KMVWAACGLP…FTALCLAILE (196 aa)). Residue 135–190 (VAELGLPIFVKPVHEGSSMGATKVTAASQLKAAWERAARFDDLVLAEEFIVGAELT) coordinates ATP. The Mg(2+) site is built by D258, E271, and N273.

The protein belongs to the D-alanine--D-alanine ligase family. Requires Mg(2+) as cofactor. Mn(2+) is required as a cofactor.

It localises to the cytoplasm. It catalyses the reaction 2 D-alanine + ATP = D-alanyl-D-alanine + ADP + phosphate + H(+). It participates in cell wall biogenesis; peptidoglycan biosynthesis. Its function is as follows. Cell wall formation. In Aromatoleum aromaticum (strain DSM 19018 / LMG 30748 / EbN1) (Azoarcus sp. (strain EbN1)), this protein is D-alanine--D-alanine ligase.